The primary structure comprises 199 residues: Streptomycin biosynthesis protein StrG (199 aa).

Its pathway is antibiotic biosynthesis; streptomycin biosynthesis. Functionally, may be involved in the formation of N-methyl-L-glucosamine. This Streptomyces griseus protein is Streptomycin biosynthesis protein StrG (strG).